We begin with the raw amino-acid sequence, 344 residues long: Dihydroorotase (344 aa).

Residues histidine 13 and histidine 15 each contribute to the Zn(2+) site. Residues 15–17 (HLR) and asparagine 41 contribute to the substrate site. Residues lysine 99, histidine 136, and histidine 174 each coordinate Zn(2+). Lysine 99 bears the N6-carboxylysine mark. Position 136 (histidine 136) interacts with substrate. Residue leucine 219 participates in substrate binding. Aspartate 247 contributes to the Zn(2+) binding site. The active site involves aspartate 247. Positions 251 and 263 each coordinate substrate.

The protein belongs to the metallo-dependent hydrolases superfamily. DHOase family. Class II DHOase subfamily. In terms of assembly, homodimer. The cofactor is Zn(2+).

It catalyses the reaction (S)-dihydroorotate + H2O = N-carbamoyl-L-aspartate + H(+). Its pathway is pyrimidine metabolism; UMP biosynthesis via de novo pathway; (S)-dihydroorotate from bicarbonate: step 3/3. Catalyzes the reversible cyclization of carbamoyl aspartate to dihydroorotate. The sequence is that of Dihydroorotase from Acinetobacter baylyi (strain ATCC 33305 / BD413 / ADP1).